A 285-amino-acid chain; its full sequence is Polyamine aminopropyltransferase (285 aa).

Residues Asp5–Lys241 enclose the PABS domain. Residue Gln35 coordinates S-methyl-5'-thioadenosine. Spermidine contacts are provided by His66 and Asp90. Residues Asp110 and Asp141–Gly142 contribute to the S-methyl-5'-thioadenosine site. Asp160 (proton acceptor) is an active-site residue. Asp160–Asp163 contacts spermidine. Pro167 serves as a coordination point for S-methyl-5'-thioadenosine.

The protein belongs to the spermidine/spermine synthase family. In terms of assembly, homodimer or homotetramer.

It is found in the cytoplasm. It catalyses the reaction S-adenosyl 3-(methylsulfanyl)propylamine + putrescine = S-methyl-5'-thioadenosine + spermidine + H(+). The protein operates within amine and polyamine biosynthesis; spermidine biosynthesis; spermidine from putrescine: step 1/1. Catalyzes the irreversible transfer of a propylamine group from the amino donor S-adenosylmethioninamine (decarboxy-AdoMet) to putrescine (1,4-diaminobutane) to yield spermidine. This chain is Polyamine aminopropyltransferase, found in Xanthomonas campestris pv. campestris (strain 8004).